A 428-amino-acid chain; its full sequence is E3 ubiquitin-protein ligase RNF128 (428 aa).

A signal peptide spans methionine 1–glycine 38. N-linked (GlcNAc...) asparagine glycosylation is found at asparagine 48, asparagine 59, and asparagine 101. The region spanning serine 75–isoleucine 183 is the PA domain. A helical membrane pass occupies residues isoleucine 208–phenylalanine 228. The RING-type; atypical zinc-finger motif lies at cysteine 277–lysine 318. The span at valine 342–serine 351 shows a compositional bias: polar residues. A disordered region spans residues valine 342–serine 428.

Post-translationally, auto-ubiquitinated. Controls the development of T-cell clonal anergy by ubiquitination. Expressed in brain, kidney, heart, liver, ovary, testis and thymus. Expression increased as early as 4 hours by 5- to 7-fold in anergized cultures as compared to resting or activated cells.

The protein resides in the cytoplasm. It localises to the endomembrane system. Its subcellular location is the cytoskeleton. The protein localises to the perinuclear region. It carries out the reaction S-ubiquitinyl-[E2 ubiquitin-conjugating enzyme]-L-cysteine + [acceptor protein]-L-lysine = [E2 ubiquitin-conjugating enzyme]-L-cysteine + N(6)-ubiquitinyl-[acceptor protein]-L-lysine.. Its pathway is protein modification; protein ubiquitination. In terms of biological role, E3 ubiquitin-protein ligase that catalyzes 'Lys-27', 'Lys-48'- or 'Lys-63'-linked polyubiquitin chains formation and plays a role in different biological processes such as modulation of immune response, cytoskeletal dynamics or protein homeostasis. Inhibits IL2 and IL4 transcription, thereby playing an important role in the induction of the anergic phenotype, a long-term stable state of T-lymphocyte unresponsiveness to antigenic stimulation associated with the blockade of interleukin production. Ubiquitinates ARPC5 with 'Lys-48' linkages and COR1A with 'Lys-63' linkages leading to their degradation, down-regulation of these cytoskeletal components results in impaired lamellipodium formation and reduced accumulation of F-actin at the immunological synapse. Functions in the patterning of the dorsal ectoderm; sensitizes ectoderm to respond to neural-inducing signals. Plays a positive role in innate immune response by promoting 'Lys-63'-linked ubiquitination of TBK1 after RNA- or DNA-virus infection. Regulates alveolar macrophage activation and neutrophil infiltration by interacting with TLR4, targeting it for degradation, and inhibiting NF-kappa-B activation, hence decreasing pro-inflammatory cytokines. Negatively regulates the IL-3/STAT5 signaling pathway by facilitating 'Lys-27'-linked polyubiquitination of IL3RA leading to its degradation via lysosomal pathway. Directly regulates the N-glycosylation process in the endoplasmic reticulum by targeting the glycosyl-transferase RPN1 for ubiquitination and degradation. Other substrates targeted for degradation by RNF128 include transmembrane proteins CD40L, CD83 or the tetraspanin CD151. This is E3 ubiquitin-protein ligase RNF128 (Rnf128) from Mus musculus (Mouse).